The sequence spans 3413 residues: Protein pecanex (3413 aa).

2 consecutive transmembrane segments (helical) span residues 33–53 (VVHLYLWLYLLCSPFVAYLYF) and 57–77 (WLTWCLYCVITSLTILMVKLA). Asn164 carries an N-linked (GlcNAc...) asparagine glycan. Over residues 182–195 (GSQQDQQSLAGSAS) the composition is skewed to low complexity. 2 disordered regions span residues 182 to 213 (GSQQDQQSLAGSASVSKSIRSTGPGGNSSTSA) and 235 to 314 (GSSA…ENKL). The span at 196 to 213 (VSKSIRSTGPGGNSSTSA) shows a compositional bias: polar residues. Asn208 carries an N-linked (GlcNAc...) asparagine glycan. Low complexity predominate over residues 302–312 (AAAAANSNAEN). N-linked (GlcNAc...) asparagine glycosylation occurs at Asn317. 4 disordered regions span residues 327–363 (PSFLHSQPTNKARGQTNPRQHFITSAPSTGIGGGDAP), 379–403 (LVNPGRSSRLQRHRSSETHDERLKH), 540–609 (PGTG…GTGG), and 625–651 (PSVSNLSPHPNSVEAISGQQQMRNPLP). The span at 330-354 (LHSQPTNKARGQTNPRQHFITSAPS) shows a compositional bias: polar residues. A compositionally biased stretch (basic and acidic residues) spans 392 to 402 (RSSETHDERLK). The segment covering 541-559 (GTGGSVTGGGGAAGGGGSA) has biased composition (gly residues). N-linked (GlcNAc...) asparagine glycosylation is found at Asn569 and Asn581. A compositionally biased stretch (polar residues) spans 569–582 (NATSYKHGSSQSNK). Residues 599–609 (GTSGGAGGTGG) show a composition bias toward gly residues. Residues 625 to 634 (PSVSNLSPHP) show a composition bias toward polar residues. An N-linked (GlcNAc...) asparagine glycan is attached at Asn685. Residues 720–730 (EKTAHEEHGDD) show a composition bias toward basic and acidic residues. 4 disordered regions span residues 720 to 745 (EKTAHEEHGDDCLGIGQGNADDDDEV), 816 to 873 (HHHS…NRQP), 886 to 921 (RQELSHQSGAVIPAPNPPVPIRSEADSGCPSSDCEQ), and 1002 to 1021 (KQTKQASRNSSSSNSTHSIS). Positions 816-826 (HHHSHLHHHKA) are enriched in basic residues. A compositionally biased stretch (low complexity) spans 828-846 (SVEGAGPSGGSVAVGVSAG). The segment covering 847-856 (NDDEDEETED) has biased composition (acidic residues). N-linked (GlcNAc...) asparagine glycosylation is present at Asn857. Residues 1008-1021 (SRNSSSSNSTHSIS) are compositionally biased toward low complexity. N-linked (GlcNAc...) asparagine glycans are attached at residues Asn1010, Asn1015, Asn1069, and Asn1199. Transmembrane regions (helical) follow at residues 1315–1335 (MHVLLASLLCTLVACLGAAIL) and 1343–1363 (LCALLFCAVIAGAQYSLVKSV). The N-linked (GlcNAc...) asparagine glycan is linked to Asn1375. A run of 4 helical transmembrane segments spans residues 1376-1396 (KTVAYSRAIYFCLAGGMLLLL), 1423-1443 (VVALLLQALYILLLCFPIIFS), 1474-1494 (LLGSFLCVVRSVLAVMLLYGP), and 1504-1524 (GTQYILFSIFCAMLVPLGYHL). Asn1572 carries an N-linked (GlcNAc...) asparagine glycan. 3 disordered regions span residues 1577–1675 (QLTT…TGEP), 1722–1744 (DKISSSSATNPGDMSTLTAGAGT), and 1760–1813 (AEAE…LPDP). Basic and acidic residues-rich tracts occupy residues 1587–1598 (RQTDVKTEHEQI) and 1607–1620 (TVNEEHHEKDHGAD). Low complexity predominate over residues 1639–1666 (KTSSLGSSQQTLGKTISSSKRAITASSS). The span at 1725-1738 (SSSSATNPGDMSTL) shows a compositional bias: polar residues. 5 repeat units span residues 1776–1777 (GT), 1778–1779 (GT), 1780–1781 (GT), 1782–1783 (GT), and 1784–1785 (GT). A 5 X 2 AA tandem repeats of G-T region spans residues 1776-1785 (GTGTGTGTGT). Residues Asn1791 and Asn1804 are each glycosylated (N-linked (GlcNAc...) asparagine). The segment covering 1799–1808 (GNTNSNGTGN) has biased composition (low complexity). 5 consecutive transmembrane segments (helical) span residues 1830–1850 (LVVMTLLAVSVLGLHCSTVFT), 1856–1876 (LNVVLYSFIGVLGLLLHYIVP), 1914–1934 (LYIYLSVLERNVLFPLLAISS), 1940–1960 (QLIVAKFGLPWGTLIVAICAL), and 1976–1996 (IIIFTVLLFRIDFAMATETFI). Residues 2344 to 2463 (SMGGAPPAQA…HSFANISRQT (120 aa)) are disordered. Low complexity predominate over residues 2346–2370 (GGAPPAQAPAAAGGASSAPATAGVA). N-linked (GlcNAc...) asparagine glycans are attached at residues Asn2380 and Asn2387. Residues 2389–2411 (SAHGGQAGPSSGQSKSQSQQQLR) show a composition bias toward low complexity. Residues 2437-2447 (GTGGVTGGGGD) show a composition bias toward gly residues. The span at 2449-2463 (QLSSSHSFANISRQT) shows a compositional bias: polar residues. N-linked (GlcNAc...) asparagine glycosylation is found at Asn2458, Asn2619, and Asn2717. 2 disordered regions span residues 2908–2997 (LNRE…SSGS) and 3198–3242 (ESST…GDDG). A compositionally biased stretch (basic and acidic residues) spans 2940–2956 (RRPEVGSSRGRDHERRA). An N-linked (GlcNAc...) asparagine glycan is attached at Asn3246. A disordered region spans residues 3295-3413 (AEESKEKGTA…NGESEAGTTV (119 aa)). Acidic residues predominate over residues 3310–3323 (EGEEGVGEMEIEPE). Residues 3364-3377 (TSSTSSAKSTSSPS) are compositionally biased toward low complexity. The segment covering 3380-3406 (QEEEDAVDPEETPELASEESPSDENGE) has biased composition (acidic residues).

The protein belongs to the pecanex family.

It localises to the membrane. Functionally, involved in neurogenesis. The polypeptide is Protein pecanex (pcx) (Drosophila melanogaster (Fruit fly)).